Here is a 218-residue protein sequence, read N- to C-terminus: MPMTLGYWDIRGLAHAIRLLLEYTDTSYEDKKYTMGDAPDYDRSQWLSEKFKLGLDFPNLPYLIDGSHKITQSNAILRYLARKHNLCGETEEERIRVDILENQAMDTRIQLAMVCYSPDFEKKKPEYLEGLPEKMKLYSEFLGKQPWFAGNKVTYVDFLVYDVLDQHRIFEPKCLDAFPNLKDFMGRFEGLKKISDYMKSSRFLSKPIFAKMAFWNPK.

The 87-residue stretch at 2 to 88 (PMTLGYWDIR…YLARKHNLCG (87 aa)) folds into the GST N-terminal domain. 7–8 (YW) contacts glutathione. Phosphoserine is present on residues Ser27 and Ser44. Glutathione contacts are provided by residues 43-46 (RSQW), Lys50, 59-60 (NL), and 72-73 (QS). The GST C-terminal domain occupies 90–208 (TEEERIRVDI…KSSRFLSKPI (119 aa)). Tyr116 contributes to the substrate binding site. Phosphoserine is present on Ser117.

It belongs to the GST superfamily. Mu family. Homodimer.

It is found in the cytoplasm. The catalysed reaction is RX + glutathione = an S-substituted glutathione + a halide anion + H(+). It catalyses the reaction 11(S)-hydroxy-14(S),15(S)-epoxy-(5Z,8Z,12E)-eicosatrienoate + glutathione = (11S,15S)-dihydroxy-14(R)-S-glutathionyl-(5Z,8Z,12E)-eicosatrienoate. Its function is as follows. Conjugation of reduced glutathione to a wide number of exogenous and endogenous hydrophobic electrophiles. Participates in the formation of novel hepoxilin regioisomers. This Mus musculus (Mouse) protein is Glutathione S-transferase Mu 2.